A 249-amino-acid chain; its full sequence is Small ribosomal subunit protein eS6 (249 aa).

Positions 223-238 (LRQRDHSKKHTRKVHA) are enriched in basic residues. Residues 223-249 (LRQRDHSKKHTRKVHAQRAEVAAFQKK) are disordered.

The protein belongs to the eukaryotic ribosomal protein eS6 family. Ribosomal protein S6 is the major substrate of protein kinases in eukaryote ribosomes.

Functionally, component of the 40S small ribosomal subunit. Plays an important role in controlling cell growth and proliferation through the selective translation of particular classes of mRNA. The protein is Small ribosomal subunit protein eS6 (RPS6) of Leishmania major.